The sequence spans 365 residues: tRNA N6-adenosine threonylcarbamoyltransferase (365 aa).

The Fe cation site is built by His119 and His123. Substrate contacts are provided by residues 141 to 145 (LVSGG), Asp174, Gly187, and Asn289. Fe cation is bound at residue Asp317. The tract at residues 341–365 (SARPRWPLDKTSPALIGSGKKGAKA) is disordered.

This sequence belongs to the KAE1 / TsaD family. The cofactor is Fe(2+).

Its subcellular location is the cytoplasm. It catalyses the reaction L-threonylcarbamoyladenylate + adenosine(37) in tRNA = N(6)-L-threonylcarbamoyladenosine(37) in tRNA + AMP + H(+). Functionally, required for the formation of a threonylcarbamoyl group on adenosine at position 37 (t(6)A37) in tRNAs that read codons beginning with adenine. Is involved in the transfer of the threonylcarbamoyl moiety of threonylcarbamoyl-AMP (TC-AMP) to the N6 group of A37, together with TsaE and TsaB. TsaD likely plays a direct catalytic role in this reaction. The polypeptide is tRNA N6-adenosine threonylcarbamoyltransferase (Ruegeria sp. (strain TM1040) (Silicibacter sp.)).